We begin with the raw amino-acid sequence, 601 residues long: Alpha-terpineol synthase, chloroplastic (601 aa).

A chloroplast-targeting transit peptide spans 1–47; the sequence is MSTISIHHVGILRNPLHSKSKRASINKPWSLSLPRSSSASRLVEPCR. Mn(2+)-binding residues include Asp-357 and Asp-361. The DDXXD motif signature appears at 357–361; sequence DDVYD. Homodimerization regions lie at residues 363–369 and 435–471; these read YGTLDEL and EAEW…ELSL. 2 residues coordinate Mn(2+): Asp-499 and Glu-507.

The protein belongs to the terpene synthase family. As to quaternary structure, homodimer. Mn(2+) is required as a cofactor. Mg(2+) serves as cofactor.

The protein resides in the plastid. Its subcellular location is the chloroplast. It catalyses the reaction (2E)-geranyl diphosphate + H2O = (S)-alpha-terpineol + diphosphate. The catalysed reaction is (2E)-geranyl diphosphate + H2O = (R)-alpha-terpineol + diphosphate. The protein operates within secondary metabolite biosynthesis; terpenoid biosynthesis. Involved in the biosynthesis of phenolic monoterpenes natural products. Monoterpene synthase which catalyzes the conversion of geranyl diphosphate (GPP) to alpha-terpineol (isomer is not determined). This is Alpha-terpineol synthase, chloroplastic from Thymus caespititius (Cretan thyme).